Reading from the N-terminus, the 687-residue chain is Ferric transport system permease protein FbpB (687 aa).

19 helical membrane-spanning segments follow: residues 10 to 30, 50 to 70, 85 to 105, 106 to 126, 141 to 161, 192 to 212, 226 to 246, 271 to 291, 318 to 338, 347 to 367, 378 to 398, 425 to 445, 450 to 472, 484 to 504, 517 to 537, 538 to 558, 594 to 614, 620 to 640, and 649 to 669; these read LFES…ALPS, GWSS…FWLL, LGLI…YKVS, MGYS…FAFA, LLSI…AIFI, LFLS…FALY, IFSI…VTLM, GFNG…FMIL, YNII…IVFI, PLVL…YIAG, LGSM…MWIG, IIVM…SIFY, VNWG…QGLS, IYAG…AYIV, FLTM…YILA, FNDA…SMVM, IWFI…VTSF, TVSA…AYIL, and GVAI…ILFF. Residues 188–393 enclose the ABC transmembrane type-1 1 domain; it reads ISNSLFLSGF…IFSLLIFIVQ (206 aa). The region spanning 479 to 669 is the ABC transmembrane type-1 2 domain; that stretch reads LINTMIYAGI…VVMMAIILFF (191 aa).

Belongs to the binding-protein-dependent transport system permease family. FbpB subfamily. The complex is composed of two ATP-binding proteins (FbpC), two transmembrane proteins (FbpB) and a solute-binding protein (FbpA).

The protein resides in the cell inner membrane. Part of the ABC transporter complex FbpABC (TC 3.A.1.10.1) involved in Fe(3+) ions import. Probably responsible for the translocation of the substrate across the membrane. This is Ferric transport system permease protein FbpB (fbpB) from Actinobacillus pleuropneumoniae (Haemophilus pleuropneumoniae).